The primary structure comprises 64 residues: MDARLLEILVCPICKGPLHYDRAAQELICNADKLAYPVRDGIPVMLVDEARQTVEGTPVDPSGR.

Belongs to the UPF0434 family.

This Burkholderia multivorans (strain ATCC 17616 / 249) protein is UPF0434 protein Bmul_0750/BMULJ_02510.